A 114-amino-acid polypeptide reads, in one-letter code: Biofilm growth-associated repressor (114 aa).

One can recognise an HTH arsR-type domain in the interval 17 to 111; the sequence is DMEKRANEVA…ALYTIFCAQE (95 aa). Residues 51 to 74 constitute a DNA-binding region (H-T-H motif); it reads VGELEQQIGIGQPTLSQQLGVLRE.

Represses an operon that comprises itself, XF_0764, XF_0765, XF_0766 and blh. Binds to a palindromic AT-rich sequence spanning the -10 region of the blh promoter and blocks transcription of the operon. The polypeptide is Biofilm growth-associated repressor (bigR) (Xylella fastidiosa (strain 9a5c)).